Here is a 633-residue protein sequence, read N- to C-terminus: DNA mismatch repair protein MutL (633 aa).

The tract at residues 338–407 (AAPEPERTLP…VPPPTLRAIP (70 aa)) is disordered. The segment covering 366 to 391 (PGSAFPAAARPAPASSAAQPPLSSSA) has biased composition (low complexity).

It belongs to the DNA mismatch repair MutL/HexB family.

Functionally, this protein is involved in the repair of mismatches in DNA. It is required for dam-dependent methyl-directed DNA mismatch repair. May act as a 'molecular matchmaker', a protein that promotes the formation of a stable complex between two or more DNA-binding proteins in an ATP-dependent manner without itself being part of a final effector complex. The polypeptide is DNA mismatch repair protein MutL (Akkermansia muciniphila (strain ATCC BAA-835 / DSM 22959 / JCM 33894 / BCRC 81048 / CCUG 64013 / CIP 107961 / Muc)).